We begin with the raw amino-acid sequence, 244 residues long: Phosphoadenosine 5'-phosphosulfate reductase (244 aa).

Residue C239 is the Nucleophile; cysteine thiosulfonate intermediate of the active site.

It belongs to the PAPS reductase family. CysH subfamily.

The protein localises to the cytoplasm. The enzyme catalyses [thioredoxin]-disulfide + sulfite + adenosine 3',5'-bisphosphate + 2 H(+) = [thioredoxin]-dithiol + 3'-phosphoadenylyl sulfate. It participates in sulfur metabolism; hydrogen sulfide biosynthesis; sulfite from sulfate: step 3/3. Its function is as follows. Catalyzes the formation of sulfite from phosphoadenosine 5'-phosphosulfate (PAPS) using thioredoxin as an electron donor. The chain is Phosphoadenosine 5'-phosphosulfate reductase from Salmonella newport (strain SL254).